The following is a 767-amino-acid chain: Bifunctional lysine-specific demethylase and histidyl-hydroxylase NO66 (767 aa).

Positions 21 to 324 are disordered; the sequence is TVSQKQQREK…GRQEAHRQNS (304 aa). Residue S44 is modified to Phosphoserine. The span at 46 to 71 shows a compositional bias: acidic residues; that stretch reads SDDDDEDDGEGEDDNDSNSDEDESGS. The span at 72–81 shows a compositional bias: low complexity; the sequence is ESDATSADDS. Over residues 82 to 98 the composition is skewed to acidic residues; it reads FSSDDNDDDDSGDEDGS. Composition is skewed to polar residues over residues 127-137 and 177-199; these read YTINSENSSVE and ESAT…TSKP. A Phosphoserine modification is found at S214. The span at 262–279 shows a compositional bias: polar residues; it reads PSSSGASCPLPSKTSKQV. Over residues 315 to 324 the composition is skewed to basic and acidic residues; the sequence is GRQEAHRQNS. Residues 420–565 enclose the JmjC domain; that stretch reads CSIRILNPST…NLLEKLMPMV (146 aa). Residues H466, D468, and H531 each coordinate Fe cation.

This sequence belongs to the ROX family. NO66 subfamily. Requires Fe(2+) as cofactor.

The protein localises to the nucleus. The enzyme catalyses N(6),N(6)-dimethyl-L-lysyl(36)-[histone H3] + 2 2-oxoglutarate + 2 O2 = L-lysyl(36)-[histone H3] + 2 formaldehyde + 2 succinate + 2 CO2. Functionally, oxygenase that can act as both a histone lysine demethylase and a ribosomal histidine hydroxylase. Specifically demethylates 'Lys-4' (H3K4me) and 'Lys-36' (H3K36me) of histone H3, thereby playing a central role in histone code. The polypeptide is Bifunctional lysine-specific demethylase and histidyl-hydroxylase NO66 (Drosophila willistoni (Fruit fly)).